The sequence spans 1401 residues: DNA-directed RNA polymerase subunit beta' (1401 aa).

Residues C70, C72, C85, and C88 each contribute to the Zn(2+) site. Mg(2+)-binding residues include D460, D462, and D464. The Zn(2+) site is built by C808, C882, C889, and C892.

It belongs to the RNA polymerase beta' chain family. The RNAP catalytic core consists of 2 alpha, 1 beta, 1 beta' and 1 omega subunit. When a sigma factor is associated with the core the holoenzyme is formed, which can initiate transcription. The cofactor is Mg(2+). Requires Zn(2+) as cofactor.

It carries out the reaction RNA(n) + a ribonucleoside 5'-triphosphate = RNA(n+1) + diphosphate. In terms of biological role, DNA-dependent RNA polymerase catalyzes the transcription of DNA into RNA using the four ribonucleoside triphosphates as substrates. The sequence is that of DNA-directed RNA polymerase subunit beta' from Legionella pneumophila subsp. pneumophila (strain Philadelphia 1 / ATCC 33152 / DSM 7513).